Consider the following 96-residue polypeptide: Co-chaperonin GroES (96 aa).

This sequence belongs to the GroES chaperonin family. In terms of assembly, heptamer of 7 subunits arranged in a ring. Interacts with the chaperonin GroEL.

Its subcellular location is the cytoplasm. In terms of biological role, together with the chaperonin GroEL, plays an essential role in assisting protein folding. The GroEL-GroES system forms a nano-cage that allows encapsulation of the non-native substrate proteins and provides a physical environment optimized to promote and accelerate protein folding. GroES binds to the apical surface of the GroEL ring, thereby capping the opening of the GroEL channel. This chain is Co-chaperonin GroES, found in Pelagibacter ubique (strain HTCC1062).